A 1728-amino-acid chain; its full sequence is Nebulin-related-anchoring protein (1728 aa).

The region spanning 4 to 64 (QACSRCGYGV…HAHNPKNNTF (61 aa)) is the LIM zinc-binding domain. 41 Nebulin repeats span residues 173–200 (TPAY…ERVS), 201–235 (TFTP…QQRG), 244–271 (TPAY…REMK), 313–340 (TPAY…KMKG), 345–379 (HSLA…NSKG), 386–414 (ETPQ…TQLR), 416–450 (HYDG…HDVV), 484–518 (KFSS…RNKL), 519–553 (NYTL…KTKG), 555–589 (GFEM…KMKG), 599–623 (LLHS…ESKT), 624–658 (HFNL…DYTV), 659–689 (LPED…WMRG), 699–721 (NLEQ…RVDE), 723–757 (KFTS…QSVH), 758–792 (QYTI…KQKA), 794–828 (GFEL…RSRG), 841–866 (QMSH…DTRS), 867–893 (QCHI…VGYR), 898–932 (CFTA…WMKG), 943–960 (VEQA…KYRQ), 966–1000 (KFTS…NVKH), 1001–1035 (HYTQ…RLRD), 1037–1071 (GYKL…RMKG), 1075–1109 (GSRS…HAKA), 1110–1136 (HFHL…QDYR), 1141–1175 (QHTV…FMRG), 1180–1203 (VPGT…KYRQ), 1209–1243 (KYTA…DARH), 1244–1278 (QYTM…NLRA), 1280–1314 (GYKL…KERG), 1318–1352 (GVRN…SSQA), 1353–1379 (QCHL…HDYR), 1384–1418 (EFTA…GMKG), 1425–1446 (QSPQ…KYRK), 1452–1478 (KFTT…RLYR), 1487–1521 (RYTP…QSRA), 1523–1557 (GYDF…RDRG), 1561–1595 (GYRS…KGRS), 1596–1630 (QFHS…QHTS), and 1637–1661 (LKHA…LTRG). T203 is modified (phosphothreonine). Phosphoserine is present on S1078.

Interacts with actin, alpha-actinin, KLHL41, TLN1 and VCL. Interacts with CSRP3. In terms of tissue distribution, expressed in cardiac and skeletal muscle. Not detected in kidney, spleen, liver, brain, lung, stomach or uterus.

Functionally, may be involved in anchoring the terminal actin filaments in the myofibril to the membrane and in transmitting tension from the myofibrils to the extracellular matrix. This is Nebulin-related-anchoring protein from Mus musculus (Mouse).